Reading from the N-terminus, the 449-residue chain is L10-interacting MYB domain-containing protein (449 aa).

Residues 162–225 (SNPQTKGYWS…YTRPQLKNHW (64 aa)) enclose the Myb-like domain. The disordered stretch occupies residues 297-324 (TYTPPSRSRKKLLHNRSESPQWRDTTPL). Positions 314–324 (ESPQWRDTTPL) are enriched in polar residues.

In terms of assembly, interacts with RPL10A. Expressed in seedlings, leaves, roots, stems and flowers.

It is found in the nucleus. Functionally, transcriptional repressor that associates with ribosomal protein promoters. This Arabidopsis thaliana (Mouse-ear cress) protein is L10-interacting MYB domain-containing protein.